A 359-amino-acid chain; its full sequence is Putative plant UBX domain-containing protein 15 (359 aa).

Residues D277 to T357 enclose the UBX domain.

The polypeptide is Putative plant UBX domain-containing protein 15 (Arabidopsis thaliana (Mouse-ear cress)).